The following is a 380-amino-acid chain: Cytochrome b (380 aa).

Helical transmembrane passes span phenylalanine 34–methionine 54, tryptophan 78–isoleucine 99, tryptophan 114–leucine 134, and phenylalanine 179–threonine 199. Residues histidine 84 and histidine 98 each contribute to the heme b site. Histidine 183 and histidine 197 together coordinate heme b. A ubiquinone is bound at residue histidine 202. The next 4 helical transmembrane spans lie at threonine 227–serine 247, leucine 289–histidine 309, leucine 321–serine 341, and phenylalanine 348–proline 368.

This sequence belongs to the cytochrome b family. As to quaternary structure, the cytochrome bc1 complex contains 11 subunits: 3 respiratory subunits (MT-CYB, CYC1 and UQCRFS1), 2 core proteins (UQCRC1 and UQCRC2) and 6 low-molecular weight proteins (UQCRH/QCR6, UQCRB/QCR7, UQCRQ/QCR8, UQCR10/QCR9, UQCR11/QCR10 and a cleavage product of UQCRFS1). This cytochrome bc1 complex then forms a dimer. It depends on heme b as a cofactor.

The protein resides in the mitochondrion inner membrane. Functionally, component of the ubiquinol-cytochrome c reductase complex (complex III or cytochrome b-c1 complex) that is part of the mitochondrial respiratory chain. The b-c1 complex mediates electron transfer from ubiquinol to cytochrome c. Contributes to the generation of a proton gradient across the mitochondrial membrane that is then used for ATP synthesis. The sequence is that of Cytochrome b (MT-CYB) from Amazilia tzacatl (Rufous-tailed hummingbird).